A 236-amino-acid chain; its full sequence is 2,3,4,5-tetrahydropyridine-2,6-dicarboxylate N-acetyltransferase (236 aa).

The protein belongs to the transferase hexapeptide repeat family. DapH subfamily.

It catalyses the reaction (S)-2,3,4,5-tetrahydrodipicolinate + acetyl-CoA + H2O = L-2-acetamido-6-oxoheptanedioate + CoA. It participates in amino-acid biosynthesis; L-lysine biosynthesis via DAP pathway; LL-2,6-diaminopimelate from (S)-tetrahydrodipicolinate (acetylase route): step 1/3. Catalyzes the transfer of an acetyl group from acetyl-CoA to tetrahydrodipicolinate. The chain is 2,3,4,5-tetrahydropyridine-2,6-dicarboxylate N-acetyltransferase from Clostridium botulinum (strain ATCC 19397 / Type A).